A 342-amino-acid chain; its full sequence is tRNA N6-adenosine threonylcarbamoyltransferase (342 aa).

Residues H115 and H119 each coordinate Fe cation. Substrate contacts are provided by residues 138–142 (LVSGG), D171, G184, and N276. D304 contributes to the Fe cation binding site.

It belongs to the KAE1 / TsaD family. Fe(2+) is required as a cofactor.

Its subcellular location is the cytoplasm. It carries out the reaction L-threonylcarbamoyladenylate + adenosine(37) in tRNA = N(6)-L-threonylcarbamoyladenosine(37) in tRNA + AMP + H(+). In terms of biological role, required for the formation of a threonylcarbamoyl group on adenosine at position 37 (t(6)A37) in tRNAs that read codons beginning with adenine. Is involved in the transfer of the threonylcarbamoyl moiety of threonylcarbamoyl-AMP (TC-AMP) to the N6 group of A37, together with TsaE and TsaB. TsaD likely plays a direct catalytic role in this reaction. In Dichelobacter nodosus (strain VCS1703A), this protein is tRNA N6-adenosine threonylcarbamoyltransferase.